Reading from the N-terminus, the 255-residue chain is Proteasome subunit alpha (255 aa).

A compositionally biased stretch (polar residues) spans 190–201 (PSTSGASGNGET). The tract at residues 190–255 (PSTSGASGNG…DKSSGDGEQN (66 aa)) is disordered. Basic and acidic residues predominate over residues 202-217 (EPSKLEVAILDRERPG).

The protein belongs to the peptidase T1A family. In terms of assembly, the 20S proteasome core is composed of 14 alpha and 14 beta subunits that assemble into four stacked heptameric rings, resulting in a barrel-shaped structure. The two inner rings, each composed of seven catalytic beta subunits, are sandwiched by two outer rings, each composed of seven alpha subunits. The catalytic chamber with the active sites is on the inside of the barrel. Has a gated structure, the ends of the cylinder being occluded by the N-termini of the alpha-subunits. Is capped by the proteasome-associated ATPase, ARC.

Its subcellular location is the cytoplasm. Its pathway is protein degradation; proteasomal Pup-dependent pathway. With respect to regulation, the formation of the proteasomal ATPase ARC-20S proteasome complex, likely via the docking of the C-termini of ARC into the intersubunit pockets in the alpha-rings, may trigger opening of the gate for substrate entry. Interconversion between the open-gate and close-gate conformations leads to a dynamic regulation of the 20S proteasome proteolysis activity. Functionally, component of the proteasome core, a large protease complex with broad specificity involved in protein degradation. This Saccharomonospora viridis (strain ATCC 15386 / DSM 43017 / JCM 3036 / CCUG 5913 / NBRC 12207 / NCIMB 9602 / P101) (Thermoactinomyces viridis) protein is Proteasome subunit alpha.